The sequence spans 644 residues: Threonine--tRNA ligase (644 aa).

The 61-residue stretch at 1 to 61 (MVAITLPDGN…TQDASVEIVT (61 aa)) folds into the TGS domain. Residues 242-533 (DHRKIGKALN…LIEHYAGWMP (292 aa)) are catalytic. Residues Cys333, His384, and His510 each contribute to the Zn(2+) site.

This sequence belongs to the class-II aminoacyl-tRNA synthetase family. In terms of assembly, homodimer. The cofactor is Zn(2+).

It is found in the cytoplasm. The catalysed reaction is tRNA(Thr) + L-threonine + ATP = L-threonyl-tRNA(Thr) + AMP + diphosphate + H(+). Functionally, catalyzes the attachment of threonine to tRNA(Thr) in a two-step reaction: L-threonine is first activated by ATP to form Thr-AMP and then transferred to the acceptor end of tRNA(Thr). Also edits incorrectly charged L-seryl-tRNA(Thr). The protein is Threonine--tRNA ligase of Psychrobacter sp. (strain PRwf-1).